Here is a 776-residue protein sequence, read N- to C-terminus: Zinc finger CCCH-type antiviral protein 1 (776 aa).

A2 bears the N-acetylalanine mark. The interval 2-254 is N-terminal domain; that stretch reads ADPGVCCFIT…DRSKSRDRFL (253 aa). A Nuclear localization signal motif is present at residues 69-76; that stretch reads RARVCRRK. C3H1-type zinc fingers lie at residues 73 to 86, 88 to 110, 150 to 172, and 169 to 193; these read CRRKYCQRPCDSLH, CKLNLLGRCHYAQSQRNLCKYSH, CKSYKGEGRKQTCGQPQPCERLH, and ERLHICEHFTRGNCSYLNCLRSHNL. Residues 221-249 are disordered; it reads NKHARRNPPGTRAAHPHRRGGAHRDRSKS. The tract at residues 224–254 is binding to EXOSC5; it reads ARRNPPGTRAAHPHRRGGAHRDRSKSRDRFL. Phosphoserine; by GSK3-beta is present on residues S257, S262, S266, and S270. S274 is modified (phosphoserine). At T278 the chain carries Phosphothreonine. S283 carries the post-translational modification Phosphoserine. Residues 284–291 carry the Nuclear export signal motif; that stretch reads LEDVSVDV. Residues 308-355 are disordered; that stretch reads PVSSKAAGVQGPSQMRASQEFSEDGNLDDIFSRNRSDSSSSRASAAKV. Residues 318–327 show a composition bias toward polar residues; that stretch reads GPSQMRASQE. Phosphoserine is present on residues S325, S351, and S398. Low complexity predominate over residues 344–353; sequence DSSSSRASAA. Positions 405-406 match the Nuclear localization signal motif; it reads KK. Positions 457–483 are disordered; that stretch reads WASASTHNAPNGSSQIMDETPNVSKSS. Over residues 459–483 the composition is skewed to polar residues; it reads SASTHNAPNGSSQIMDETPNVSKSS. Phosphotyrosine is present on Y501. Residues 512–562 form a disordered region; that stretch reads LAVPGEATTPVQSNRLPQSPLSSSSHRAAASGSPGKNSTHTSVSPAIESSR. Residues 523–546 are compositionally biased toward low complexity; sequence QSNRLPQSPLSSSSHRAAASGSPG. Phosphoserine occurs at positions 544 and 667. Positions 671–758 constitute a WWE domain; sequence YEEKPLSAVF…ASKTQRHVVR (88 aa).

This sequence belongs to the ARTD/PARP family. In terms of assembly, homodimer or homooligomer. Homooligomerization is essential for its antiviral activity. Interacts with EXOSC5. Interacts with EXOSC3, EXOSC7, DCP2 and DCP1A. Interacts with PARN in an RNA-independent manner. Interacts with XRN1 in an RNA-dependent manner. Interacts (via N-terminal domain) with DHX30 (via N-terminus) in an RNA-independent manner. Interacts (via N-terminal domain) with DDX17 in an RNA-independent manner. In terms of processing, phosphorylation at Ser-274 is essential for sequential phosphorylation of Ser-270, Ser-266, Ser-262 and Ser-257 by GSK3-beta. Phosphorylation by GSK3-beta enhances its antiviral activity. Expressed in the kidney and liver.

It localises to the cytoplasm. Its subcellular location is the nucleus. Functionally, antiviral protein which inhibits the replication of viruses by recruiting the cellular RNA degradation machineries to degrade the viral mRNAs. Binds to a ZAP-responsive element (ZRE) present in the target viral mRNA, recruits cellular poly(A)-specific ribonuclease PARN to remove the poly(A) tail, and the 3'-5' exoribonuclease complex exosome to degrade the RNA body from the 3'-end. It also recruits the decapping complex DCP1-DCP2 through RNA helicase p72 (DDX17) to remove the cap structure of the viral mRNA to initiate its degradation from the 5'-end. Its target viruses belong to families which include retroviridae: human immunodeficiency virus type 1 (HIV-1) and moloney and murine leukemia virus (MoMLV), filoviridae: ebola virus (EBOV) and marburg virus (MARV), togaviridae: sindbis virus (SINV) and Ross river virus (RRV). Specifically targets the multiply spliced but not unspliced or singly spliced HIV-1 mRNAs for degradation. In Rattus norvegicus (Rat), this protein is Zinc finger CCCH-type antiviral protein 1 (Zc3hav1).